A 31-amino-acid chain; its full sequence is Cytochrome b6-f complex subunit 6 (31 aa).

Residues 4 to 26 (ITSYFGFLLAASTITTALFIGLS) form a helical membrane-spanning segment.

Belongs to the PetL family. In terms of assembly, the 4 large subunits of the cytochrome b6-f complex are cytochrome b6, subunit IV (17 kDa polypeptide, PetD), cytochrome f and the Rieske protein, while the 4 small subunits are PetG, PetL, PetM and PetN. The complex functions as a dimer.

It localises to the plastid. It is found in the chloroplast thylakoid membrane. In terms of biological role, component of the cytochrome b6-f complex, which mediates electron transfer between photosystem II (PSII) and photosystem I (PSI), cyclic electron flow around PSI, and state transitions. PetL is important for photoautotrophic growth as well as for electron transfer efficiency and stability of the cytochrome b6-f complex. This chain is Cytochrome b6-f complex subunit 6, found in Acorus calamus (Sweet flag).